A 1120-amino-acid polypeptide reads, in one-letter code: Cluster 41 polyketide synthase (1120 aa).

The region spanning Pro7–Lys430 is the Ketosynthase family 3 (KS3) domain. Residues Cys178, His313, and His353 each act as for beta-ketoacyl synthase activity in the active site. The interval Val539–Asp796 is malonyl-CoA:ACP transacylase (MAT) domain. Ser625 functions as the For acyl/malonyl transferase activity in the catalytic mechanism. Residues Ile804 to Glu943 are ketoreductase (KR) domain. Residues Asp1042–Thr1116 enclose the Carrier domain. Ser1076 carries the O-(pantetheine 4'-phosphoryl)serine modification.

Its function is as follows. Polyketide synthase; part of the gene cluster 41 that mediates the biosynthesis of an extracellular and diffusible metabolite that is able to stimulate colony sclerotial production. The chain is Cluster 41 polyketide synthase from Aspergillus flavus (strain ATCC 200026 / FGSC A1120 / IAM 13836 / NRRL 3357 / JCM 12722 / SRRC 167).